We begin with the raw amino-acid sequence, 253 residues long: Probable transcriptional regulatory protein Mlut_12910 (253 aa).

This sequence belongs to the TACO1 family.

It localises to the cytoplasm. This is Probable transcriptional regulatory protein Mlut_12910 from Micrococcus luteus (strain ATCC 4698 / DSM 20030 / JCM 1464 / CCM 169 / CCUG 5858 / IAM 1056 / NBRC 3333 / NCIMB 9278 / NCTC 2665 / VKM Ac-2230) (Micrococcus lysodeikticus).